The following is a 483-amino-acid chain: Glucose-1-phosphate adenylyltransferase large subunit 3, chloroplastic/amyloplastic (483 aa).

Belongs to the bacterial/plant glucose-1-phosphate adenylyltransferase family. As to quaternary structure, heterotetramer. In terms of tissue distribution, tubers.

It localises to the plastid. Its subcellular location is the chloroplast. The protein localises to the amyloplast. The catalysed reaction is alpha-D-glucose 1-phosphate + ATP + H(+) = ADP-alpha-D-glucose + diphosphate. Its pathway is glycan biosynthesis; starch biosynthesis. Its activity is regulated as follows. Activated by 3'phosphoglycerate, inhibited by orthophosphate. Allosteric regulation. Functionally, this protein plays a role in synthesis of starch. It catalyzes the synthesis of the activated glycosyl donor, ADP-glucose from Glc-1-P and ATP. The protein is Glucose-1-phosphate adenylyltransferase large subunit 3, chloroplastic/amyloplastic (AGPS3) of Solanum tuberosum (Potato).